The sequence spans 386 residues: Chaperone protein DnaJ (386 aa).

The J domain maps to 4–68; sequence NFYDVLGVSR…QKRQQYDQLG (65 aa). Composition is skewed to basic and acidic residues over residues 22-35 and 43-79; these read KAYRKQAAEHHPDV and ERFKAIQKAKEVLTDEQKRQQYDQLGHDRFTEADKRG. Residues 22–132 are disordered; that stretch reads KAYRKQAAEH…GGNRPRQGQD (111 aa). 2 stretches are compositionally biased toward gly residues: residues 80–104 and 113–125; these read ATGGGGPGGAGGPFGGAGGAGGAGG and FGGGGGRGGGGGN. The CR-type zinc-finger motif lies at 147–229; the sequence is GATKEVTLTR…CGGDGVVREE (83 aa). Residues cysteine 160, cysteine 163, cysteine 177, cysteine 180, cysteine 203, cysteine 206, cysteine 217, and cysteine 220 each contribute to the Zn(2+) site. CXXCXGXG motif repeat units lie at residues 160 to 167, 177 to 184, 203 to 210, and 217 to 224; these read CDTCDGAG, CSQCNGRG, CPRCEGSG, and CADCGGDG.

It belongs to the DnaJ family. As to quaternary structure, homodimer. Zn(2+) is required as a cofactor.

The protein localises to the cytoplasm. In terms of biological role, participates actively in the response to hyperosmotic and heat shock by preventing the aggregation of stress-denatured proteins and by disaggregating proteins, also in an autonomous, DnaK-independent fashion. Unfolded proteins bind initially to DnaJ; upon interaction with the DnaJ-bound protein, DnaK hydrolyzes its bound ATP, resulting in the formation of a stable complex. GrpE releases ADP from DnaK; ATP binding to DnaK triggers the release of the substrate protein, thus completing the reaction cycle. Several rounds of ATP-dependent interactions between DnaJ, DnaK and GrpE are required for fully efficient folding. Also involved, together with DnaK and GrpE, in the DNA replication of plasmids through activation of initiation proteins. The chain is Chaperone protein DnaJ from Halorubrum lacusprofundi (strain ATCC 49239 / DSM 5036 / JCM 8891 / ACAM 34).